The chain runs to 393 residues: Pyrin and HIN domain-containing protein 1-like (393 aa).

One can recognise a Pyrin domain in the interval 1 to 87 (MVNEYKRIVL…ANKLKNEKAK (87 aa)). The tract at residues 82 to 188 (KNEKAKAKRK…TPTRSSSRIL (107 aa)) is disordered. Basic residues predominate over residues 87–102 (KAKRKGKGKRKTAAKR). 2 stretches are compositionally biased toward polar residues: residues 108-118 (PSTSQPMSTTN) and 126-151 (GRSTPDTQVAQLSLPTASRRNQAIQI). Over residues 152-169 (SPTIASSSGQTSSRSSET) the composition is skewed to low complexity. The segment covering 170-186 (LQSIIQSPETPTRSSSR) has biased composition (polar residues). The region spanning 219–393 (NVPKEPSEEN…NPGDKLRLML (175 aa)) is the HIN-200 domain.

It belongs to the HIN-200 family.

It is found in the nucleus. In Mus musculus (Mouse), this protein is Pyrin and HIN domain-containing protein 1-like.